The following is a 246-amino-acid chain: Octanoyltransferase (246 aa).

Residues 50-231 (PDTDDEIWVV…RLIAHLDGAT (182 aa)) enclose the BPL/LPL catalytic domain. Residues 90–97 (RGGQITYH), 162–164 (ALG), and 175–177 (GLS) contribute to the substrate site. The active-site Acyl-thioester intermediate is Cys193.

This sequence belongs to the LipB family.

It localises to the cytoplasm. The catalysed reaction is octanoyl-[ACP] + L-lysyl-[protein] = N(6)-octanoyl-L-lysyl-[protein] + holo-[ACP] + H(+). It functions in the pathway protein modification; protein lipoylation via endogenous pathway; protein N(6)-(lipoyl)lysine from octanoyl-[acyl-carrier-protein]: step 1/2. In terms of biological role, catalyzes the transfer of endogenously produced octanoic acid from octanoyl-acyl-carrier-protein onto the lipoyl domains of lipoate-dependent enzymes. Lipoyl-ACP can also act as a substrate although octanoyl-ACP is likely to be the physiological substrate. The polypeptide is Octanoyltransferase (Burkholderia pseudomallei (strain 1106a)).